The sequence spans 273 residues: Shikimate dehydrogenase (NADP(+)) (273 aa).

Residues 15 to 17 (SKS) and Thr-62 each bind shikimate. Lys-66 functions as the Proton acceptor in the catalytic mechanism. Residue Asp-78 participates in NADP(+) binding. Residues Asn-87 and Asp-103 each coordinate shikimate. NADP(+) is bound by residues 127-131 (GAGGA), 150-155 (NRTHTR), Ala-218, and Gly-238.

The protein belongs to the shikimate dehydrogenase family. Homodimer.

The catalysed reaction is shikimate + NADP(+) = 3-dehydroshikimate + NADPH + H(+). It functions in the pathway metabolic intermediate biosynthesis; chorismate biosynthesis; chorismate from D-erythrose 4-phosphate and phosphoenolpyruvate: step 4/7. Its function is as follows. Involved in the biosynthesis of the chorismate, which leads to the biosynthesis of aromatic amino acids. Catalyzes the reversible NADPH linked reduction of 3-dehydroshikimate (DHSA) to yield shikimate (SA). In Yersinia pseudotuberculosis serotype O:1b (strain IP 31758), this protein is Shikimate dehydrogenase (NADP(+)).